Consider the following 212-residue polypeptide: 2,3-bisphosphoglycerate-dependent phosphoglycerate mutase (212 aa).

Residues 9–16 (RHGQSEWN), 22–23 (TG), arginine 61, 88–91 (ERDY), lysine 99, 115–116 (RR), and 159–160 (GN) each bind substrate. Catalysis depends on histidine 10, which acts as the Tele-phosphohistidine intermediate. Catalysis depends on glutamate 88, which acts as the Proton donor/acceptor.

The protein belongs to the phosphoglycerate mutase family. BPG-dependent PGAM subfamily. In terms of assembly, homodimer.

The catalysed reaction is (2R)-2-phosphoglycerate = (2R)-3-phosphoglycerate. The protein operates within carbohydrate degradation; glycolysis; pyruvate from D-glyceraldehyde 3-phosphate: step 3/5. Catalyzes the interconversion of 2-phosphoglycerate and 3-phosphoglycerate. This chain is 2,3-bisphosphoglycerate-dependent phosphoglycerate mutase, found in Methylorubrum populi (strain ATCC BAA-705 / NCIMB 13946 / BJ001) (Methylobacterium populi).